Here is a 484-residue protein sequence, read N- to C-terminus: Chromosomal replication initiator protein DnaA (484 aa).

Positions 1–73 (MQEGKNIWSL…EILIEKGHST (73 aa)) are domain I, interacts with DnaA modulators. Residues 73 to 140 (TINVEFIHSQ…EEIHIKYRNP (68 aa)) form a domain II region. Residues 141–357 (FLKKKYTFEN…AAVTKLKAHI (217 aa)) form a domain III, AAA+ region region. ATP contacts are provided by Gly185, Gly187, Lys188, and Thr189. The tract at residues 358–484 (DLEDIEIDTN…IELMNKINKN (127 aa)) is domain IV, binds dsDNA.

Belongs to the DnaA family. As to quaternary structure, oligomerizes as a right-handed, spiral filament on DNA at oriC.

It localises to the cytoplasm. Its function is as follows. Plays an essential role in the initiation and regulation of chromosomal replication. ATP-DnaA binds to the origin of replication (oriC) to initiate formation of the DNA replication initiation complex once per cell cycle. Binds the DnaA box (a 9 base pair repeat at the origin) and separates the double-stranded (ds)DNA. Forms a right-handed helical filament on oriC DNA; dsDNA binds to the exterior of the filament while single-stranded (ss)DNA is stabiized in the filament's interior. The ATP-DnaA-oriC complex binds and stabilizes one strand of the AT-rich DNA unwinding element (DUE), permitting loading of DNA polymerase. After initiation quickly degrades to an ADP-DnaA complex that is not apt for DNA replication. Binds acidic phospholipids. This Borrelia duttonii (strain Ly) protein is Chromosomal replication initiator protein DnaA.